The sequence spans 776 residues: Microtubule-associated protein tau (776 aa).

Over residues 1–26 (MAEPRQEFEVMEDHAGTYGLGDRKDQ) the composition is skewed to basic and acidic residues. Positions 1–591 (MAEPRQEFEV…PVPMPDLKNV (591 aa)) are disordered. The residue at position 2 (Ala-2) is an N-acetylalanine. 2 positions are modified to phosphotyrosine: Tyr-18 and Tyr-29. Residue Lys-44 forms a Glycyl lysine isopeptide (Lys-Gly) (interchain with G-Cter in ubiquitin) linkage. Phosphoserine occurs at positions 46 and 61. Residues 61-71 (SETSDAKSTPT) are compositionally biased toward polar residues. A phosphothreonine mark is found at Thr-69, Thr-71, and Thr-111. Basic and acidic residues-rich tracts occupy residues 179–189 (EGGRHAPELLK) and 207–216 (GGKERPGSKE). Ser-214 carries the post-translational modification Phosphoserine. The segment covering 217 to 228 (EVDEDRDVDESS) has biased composition (acidic residues). Basic and acidic residues-rich tracts occupy residues 293–303 (KGQDAHLEFTF) and 314–323 (EQAHSEEHLG). Positions 324-340 (RAAFPGAPGEGPEARGP) are enriched in low complexity. Basic and acidic residues-rich tracts occupy residues 344 to 356 (EDTK…EPSE) and 381 to 393 (KSKD…DKKA). The segment covering 440–452 (KYVSSVTPRTGSS) has biased composition (polar residues). Residues 455–466 (KEMKLKGADGKT) show a composition bias toward basic and acidic residues. At Thr-470 the chain carries Phosphothreonine. Arg-472 carries the omega-N-methylarginine modification. Residue Lys-480 is modified to N6,N6-dimethyllysine; alternate. Position 480 is an N6-acetyllysine; alternate (Lys-480). Phosphothreonine is present on residues Thr-486, Thr-492, and Thr-498. 3 positions are modified to phosphoserine: Ser-502, Ser-526, and Ser-530. Residues 517–528 (RSERGEPPKSGD) are compositionally biased toward basic and acidic residues. Residues 529–549 (RSGYSSPGSPGTPGSRSRTPS) are compositionally biased toward low complexity. Phosphotyrosine is present on Tyr-532. Ser-533, Ser-534, and Ser-537 each carry phosphoserine. Phosphothreonine is present on residues Thr-540 and Thr-547. Ser-549 carries the post-translational modification Phosphoserine. At Thr-552 the chain carries Phosphothreonine. Lys-560 carries the post-translational modification N6-acetyllysine. A Phosphothreonine modification is found at Thr-566. Residues Ser-570 and Ser-572 each carry the phosphoserine modification. 4 Tau/MAP repeats span residues 579-609 (QTAP…GGGK), 610-640 (VQII…GGGS), 641-671 (VQIV…GGGQ), and 672-703 (VEVK…GGGN). A Glycyl lysine isopeptide (Lys-Gly) (interchain with G-Cter in ubiquitin) cross-link involves residue Lys-589. Position 594 is an N6-acetyllysine; alternate (Lys-594). Position 594 is an N6-methyllysine; alternate (Lys-594). Lys-594 is covalently cross-linked (Glycyl lysine isopeptide (Lys-Gly) (interchain with G-Cter in ubiquitin); alternate). Phosphoserine is present on Ser-597. Residue Lys-602 forms a Glycyl lysine isopeptide (Lys-Gly) (interchain with G-Cter in ubiquitin) linkage. Lys-616 bears the N6-acetyllysine; alternate mark. Lys-616 is covalently cross-linked (Glycyl lysine isopeptide (Lys-Gly) (interchain with G-Cter in ubiquitin); alternate). 2 positions are modified to phosphoserine: Ser-620 and Ser-624. Lys-625 is subject to N6-acetyllysine. Ser-628 carries the phosphoserine modification. Lys-633 carries the N6-acetyllysine; alternate modification. Lys-633 participates in a covalent cross-link: Glycyl lysine isopeptide (Lys-Gly) (interchain with G-Cter in ubiquitin); alternate. At Ser-640 the chain carries Phosphoserine. Lys-646 is subject to N6,N6-dimethyllysine; alternate. N6-acetyllysine; alternate occurs at positions 646, 652, and 656. Glycyl lysine isopeptide (Lys-Gly) (interchain with G-Cter in ubiquitin); alternate cross-links involve residues Lys-646, Lys-652, and Lys-656. Ser-659 bears the Phosphoserine mark. Residues Lys-666, Lys-678, and Lys-682 each carry the N6-acetyllysine; alternate modification. Glycyl lysine isopeptide (Lys-Gly) (interchain with G-Cter in ubiquitin); alternate cross-links involve residues Lys-666, Lys-678, and Lys-682. Arg-684 is subject to Omega-N-methylarginine. Ser-687 bears the Phosphoserine mark. Lys-688 is covalently cross-linked (Glycyl lysine isopeptide (Lys-Gly) (interchain with G-Cter in ubiquitin)). Ser-691 bears the Phosphoserine mark. Lys-704 carries the N6-acetyllysine; alternate modification. Lys-704 is covalently cross-linked (Glycyl lysine isopeptide (Lys-Gly) (interchain with G-Cter in ubiquitin); alternate). Lys-710 participates in a covalent cross-link: Glycyl lysine isopeptide (Lys-Gly) (interchain with G-Cter in ubiquitin). Lys-720 carries the N6-acetyllysine; alternate modification. Lys-720 participates in a covalent cross-link: Glycyl lysine isopeptide (Lys-Gly) (interchain with G-Cter in ubiquitin); alternate. The residue at position 729 (Tyr-729) is a Phosphotyrosine. Phosphoserine occurs at positions 731 and 735. The tract at residues 733–752 (VVSGDTSPRHLSNVSSTGSI) is disordered. Residues 736–751 (GDTSPRHLSNVSSTGS) show a composition bias toward polar residues. Position 738 is a phosphothreonine (Thr-738). Phosphoserine occurs at positions 739, 744, 751, and 757. Thr-762 is modified (phosphothreonine).

In terms of assembly, interacts with MARK1, MARK2, MARK3 and MARK4. Interacts with SQSTM1 when polyubiquitinated. Interacts with PSMC2 through SQSTM1. Interacts with FKBP4. Binds to CSNK1D. Interacts with SGK1. Interacts with EPM2A; the interaction dephosphorylates MAPT at Ser-396. Interacts with PIN1. Interacts with LRRK2. Interacts with LRP1, leading to endocytosis; this interaction is reduced in the presence of LRPAP1/RAP. Post-translationally, polyubiquitinated. Requires functional TRAF6 and may provoke SQSTM1-dependent degradation by the proteasome. In terms of processing, phosphorylation at various serine and threonine residues in S-P or T-P motifs by proline-directed protein kinases (PDPK1, CDK1, CDK5, GSK3, MAPK) (a few sites per protein in interphase, more in mitosis), and at serine residues in K-X-G-S motifs by MAP/microtubule affinity-regulating kinase (MARK1, MARK2, MARK3 or MARK4), causing detachment from microtubules, and their disassembly. Phosphorylation at Ser-597 by BRSK1 and BRSK2 in neurons affects ability to bind microtubules and plays a role in neuron polarization. Phosphorylated by PHK. Dephosphorylation at several serine and threonine residues by the serine/threonine phosphatase PPP5C. Phosphorylation at Ser-214 by SGK1 mediates microtubule depolymerization and neurite formation in hippocampal neurons.

The protein resides in the cytoplasm. The protein localises to the cytosol. Its subcellular location is the cell membrane. It is found in the cytoskeleton. It localises to the cell projection. The protein resides in the axon. The protein localises to the dendrite. In terms of biological role, promotes microtubule assembly and stability, and might be involved in the establishment and maintenance of neuronal polarity. The C-terminus binds axonal microtubules while the N-terminus binds neural plasma membrane components, suggesting that tau functions as a linker protein between both. Axonal polarity is predetermined by tau localization (in the neuronal cell) in the domain of the cell body defined by the centrosome. The short isoforms allow plasticity of the cytoskeleton whereas the longer isoforms may preferentially play a role in its stabilization. The sequence is that of Microtubule-associated protein tau (MAPT) from Pan troglodytes (Chimpanzee).